Consider the following 417-residue polypeptide: UDP-N-acetylglucosamine 1-carboxyvinyltransferase (417 aa).

Phosphoenolpyruvate is bound at residue 22–23 (KN). Position 91 (Arg91) interacts with UDP-N-acetyl-alpha-D-glucosamine. The active-site Proton donor is the Cys115. At Cys115 the chain carries 2-(S-cysteinyl)pyruvic acid O-phosphothioketal. Residues 120-124 (RPVDL), Asp304, and Ile326 each bind UDP-N-acetyl-alpha-D-glucosamine.

It belongs to the EPSP synthase family. MurA subfamily.

Its subcellular location is the cytoplasm. It catalyses the reaction phosphoenolpyruvate + UDP-N-acetyl-alpha-D-glucosamine = UDP-N-acetyl-3-O-(1-carboxyvinyl)-alpha-D-glucosamine + phosphate. It participates in cell wall biogenesis; peptidoglycan biosynthesis. Cell wall formation. Adds enolpyruvyl to UDP-N-acetylglucosamine. In Nitratidesulfovibrio vulgaris (strain DP4) (Desulfovibrio vulgaris), this protein is UDP-N-acetylglucosamine 1-carboxyvinyltransferase.